The following is a 594-amino-acid chain: UvrABC system protein C (594 aa).

The GIY-YIG domain occupies D14–I91. The region spanning D196–M231 is the UVR domain.

It belongs to the UvrC family. In terms of assembly, interacts with UvrB in an incision complex.

It is found in the cytoplasm. Functionally, the UvrABC repair system catalyzes the recognition and processing of DNA lesions. UvrC both incises the 5' and 3' sides of the lesion. The N-terminal half is responsible for the 3' incision and the C-terminal half is responsible for the 5' incision. The sequence is that of UvrABC system protein C from Streptococcus equi subsp. zooepidemicus (strain H70).